Consider the following 362-residue polypeptide: uncharacterized protein (362 aa).

3 disordered regions span residues 1-117 (MASK…GLNR), 153-172 (SSAP…GIRK), and 210-266 (RHFD…SSSN). Residues 12–23 (AKKEKEIKKEIE) show a composition bias toward basic and acidic residues. The segment covering 51–70 (ENDDTDGDGKEEDAQKEDDI) has biased composition (acidic residues). 3 stretches are compositionally biased toward low complexity: residues 100 to 112 (NSPP…TRNT), 153 to 167 (SSAP…GSPS), and 241 to 265 (VPPS…TSSS).

This is an uncharacterized protein from Caenorhabditis elegans.